Here is a 46-residue protein sequence, read N- to C-terminus: Esculentin-1R (46 aa).

Cys40 and Cys46 are disulfide-bonded.

As to expression, expressed by the skin glands.

The protein localises to the secreted. Shows antibacterial activity against representative Gram-negative and Gram-positive bacterial species, and hemolytic activity. This chain is Esculentin-1R, found in Pelophylax ridibundus (Marsh frog).